A 271-amino-acid chain; its full sequence is Ribosomal RNA small subunit methyltransferase A (271 aa).

S-adenosyl-L-methionine is bound by residues H11, L13, G38, E58, D86, and N101.

Belongs to the class I-like SAM-binding methyltransferase superfamily. rRNA adenine N(6)-methyltransferase family. RsmA subfamily.

It is found in the cytoplasm. It catalyses the reaction adenosine(1518)/adenosine(1519) in 16S rRNA + 4 S-adenosyl-L-methionine = N(6)-dimethyladenosine(1518)/N(6)-dimethyladenosine(1519) in 16S rRNA + 4 S-adenosyl-L-homocysteine + 4 H(+). Specifically dimethylates two adjacent adenosines (A1518 and A1519) in the loop of a conserved hairpin near the 3'-end of 16S rRNA in the 30S particle. May play a critical role in biogenesis of 30S subunits. The polypeptide is Ribosomal RNA small subunit methyltransferase A (Helicobacter pylori (strain ATCC 700392 / 26695) (Campylobacter pylori)).